Consider the following 363-residue polypeptide: Ribosome-binding ATPase YchF (363 aa).

The region spanning 3–257 (FKCGFVGLPN…VSAYDHLSLK (255 aa)) is the OBG-type G domain. 12–17 (NVGKST) lines the ATP pocket. Mg(2+) contacts are provided by Ser16 and Thr36. A TGS domain is found at 278-361 (NLITFFTAGK…CDGDIIHVLY (84 aa)).

Belongs to the TRAFAC class OBG-HflX-like GTPase superfamily. OBG GTPase family. YchF/OLA1 subfamily. Mg(2+) is required as a cofactor.

Functionally, ATPase that binds to both the 70S ribosome and the 50S ribosomal subunit in a nucleotide-independent manner. In Buchnera aphidicola subsp. Baizongia pistaciae (strain Bp), this protein is Ribosome-binding ATPase YchF.